Reading from the N-terminus, the 284-residue chain is Pantothenate synthetase (284 aa).

30 to 37 (MGALHNGH) is a binding site for ATP. Catalysis depends on H37, which acts as the Proton donor. Position 61 (Q61) interacts with (R)-pantoate. Q61 lines the beta-alanine pocket. 147 to 150 (GEKD) is a binding site for ATP. Q153 contacts (R)-pantoate. ATP-binding positions include L176 and 184–187 (SSSR).

The protein belongs to the pantothenate synthetase family. As to quaternary structure, homodimer.

It localises to the cytoplasm. It carries out the reaction (R)-pantoate + beta-alanine + ATP = (R)-pantothenate + AMP + diphosphate + H(+). Its pathway is cofactor biosynthesis; (R)-pantothenate biosynthesis; (R)-pantothenate from (R)-pantoate and beta-alanine: step 1/1. Catalyzes the condensation of pantoate with beta-alanine in an ATP-dependent reaction via a pantoyl-adenylate intermediate. This Bartonella henselae (strain ATCC 49882 / DSM 28221 / CCUG 30454 / Houston 1) (Rochalimaea henselae) protein is Pantothenate synthetase.